Here is a 636-residue protein sequence, read N- to C-terminus: p-hydroxybenzoate-m-hydroxylase (636 aa).

Residues 11–40, 242–244, Tyr-290, and Asp-311 each bind FAD; these read DIVI…HIDN and RLY. Residues 12 to 33 form a helical membrane-spanning segment; that stretch reads IVIVGAGPVGILLSLCMSRWGY. Residue Asn-573 is glycosylated (N-linked (GlcNAc...) asparagine).

It belongs to the PheA/TfdB FAD monooxygenase family. It depends on FAD as a cofactor.

The protein localises to the membrane. The catalysed reaction is 4-hydroxybenzoate + NADH + O2 + H(+) = 3,4-dihydroxybenzoate + NAD(+) + H2O. The enzyme catalyses 4-hydroxybenzoate + NADPH + O2 + H(+) = 3,4-dihydroxybenzoate + NADP(+) + H2O. FAD-dependent monooxygenase; part of the benzoic acid degradation pathway also known as the protocatechuic acid pathway. Benzoic acid debradation begins with the conversion of benzoic acid into 4-hydroxybenzoic acid through hydroxylation by the benzoate-4-monooxygenase bphA, and its partner NADPH-cytochrome P450 reductase cprA which act as a mediator in electron donation from NADPH. 4-Hydroxybenzoic acid is then converted into 3,4-dihydroxybenzoic acid (also called protocatechuic acid) by the p-hydroxybenzoate-m-hydroxylase phhA. Protocatechuic acid is converted into 3-carboxy-cis,cis-muconic acid by the intradiol ring-cleavage dioxygenase prcA, which is further metabolized through the 3-oxoadipate pathway to finally enter the tricarboxylic acid cycle (TCA). The protein is p-hydroxybenzoate-m-hydroxylase of Emericella nidulans (strain FGSC A4 / ATCC 38163 / CBS 112.46 / NRRL 194 / M139) (Aspergillus nidulans).